The primary structure comprises 463 residues: UDP-N-acetylmuramoylalanine--D-glutamate ligase (463 aa).

Gly126–Thr132 serves as a coordination point for ATP.

This sequence belongs to the MurCDEF family.

It is found in the cytoplasm. The catalysed reaction is UDP-N-acetyl-alpha-D-muramoyl-L-alanine + D-glutamate + ATP = UDP-N-acetyl-alpha-D-muramoyl-L-alanyl-D-glutamate + ADP + phosphate + H(+). The protein operates within cell wall biogenesis; peptidoglycan biosynthesis. In terms of biological role, cell wall formation. Catalyzes the addition of glutamate to the nucleotide precursor UDP-N-acetylmuramoyl-L-alanine (UMA). In Idiomarina loihiensis (strain ATCC BAA-735 / DSM 15497 / L2-TR), this protein is UDP-N-acetylmuramoylalanine--D-glutamate ligase.